A 213-amino-acid polypeptide reads, in one-letter code: Thymidylate kinase (213 aa).

10 to 17 serves as a coordination point for ATP; it reads GLEGAGKT.

It belongs to the thymidylate kinase family.

The enzyme catalyses dTMP + ATP = dTDP + ADP. In terms of biological role, phosphorylation of dTMP to form dTDP in both de novo and salvage pathways of dTTP synthesis. In Escherichia coli O6:H1 (strain CFT073 / ATCC 700928 / UPEC), this protein is Thymidylate kinase.